A 614-amino-acid chain; its full sequence is ETS-related transcription factor Elf-1 (614 aa).

Phosphoserine is present on residues serine 110, serine 163, serine 167, and serine 168. The segment at 159-199 (TYAHSPGPSSPEQPKRKKGRKTKPPRPDSPTTTPNISVKKK) is disordered. A compositionally biased stretch (basic residues) spans 173–182 (KRKKGRKTKP). Serine 187 bears the Phosphoserine mark. Phosphothreonine is present on threonine 190. Residues 208–290 (IYLWEFLLAL…EGQRLVYQFK (83 aa)) constitute a DNA-binding region (ETS). Residues 303–371 (DPSCSIESSD…VQPSEALRTV (69 aa)) form a disordered region. Residues 310–335 (SSDPSLSSTATSSRNPASRSRASSSP) show a composition bias toward low complexity. Serine 430 is subject to Phosphoserine.

Belongs to the ETS family. As to quaternary structure, binds to the underphosphorylated form of RB. May interact with other transcription factors in order to regulate specific genes. Interacts with RUNX1.

The protein resides in the nucleus. Functionally, transcription factor that activates the LYN and BLK promoters. This is ETS-related transcription factor Elf-1 (ELF1) from Bos taurus (Bovine).